Consider the following 352-residue polypeptide: Guanine nucleotide-binding protein alpha-7 subunit (352 aa).

The N-myristoyl glycine moiety is linked to residue G2. A lipid anchor (S-palmitoyl cysteine) is attached at C4. In terms of domain architecture, G-alpha spans 32 to 352 (RIIKLLLLGA…AKNLKSMGLC (321 aa)). Positions 35 to 48 (KLLLLGAGESGKST) are G1 motif. GTP is bound by residues 40-47 (GAGESGKS), 174-180 (LRTRIKT), 199-203 (DVGGQ), 268-271 (NKKD), and A324. Mg(2+)-binding residues include S47 and T180. The G2 motif stretch occupies residues 172 to 180 (DLLRTRIKT). A G3 motif region spans residues 195–204 (FRVIDVGGQR). Positions 264 to 271 (ILFLNKKD) are G4 motif. The interval 322-327 (TCATDT) is G5 motif.

Belongs to the G-alpha family. G(i/o/t/z) subfamily. G proteins are composed of 3 units; alpha, beta and gamma. The alpha chain contains the guanine nucleotide binding site.

Guanine nucleotide-binding proteins (G proteins) are involved as modulators or transducers in various transmembrane signaling systems. This Caenorhabditis elegans protein is Guanine nucleotide-binding protein alpha-7 subunit (gpa-7).